The following is a 264-amino-acid chain: Small ribosomal subunit protein eS1 (264 aa).

A disordered region spans residues 232–264 (HGEGGGSGKPSGDETGAKVERADGYEPPVQESV). The segment covering 242–255 (SGDETGAKVERADG) has biased composition (basic and acidic residues).

Belongs to the eukaryotic ribosomal protein eS1 family. As to quaternary structure, component of the small ribosomal subunit. Mature ribosomes consist of a small (40S) and a large (60S) subunit. The 40S subunit contains about 33 different proteins and 1 molecule of RNA (18S). The 60S subunit contains about 49 different proteins and 3 molecules of RNA (28S, 5.8S and 5S). Part of the small subunit (SSU) processome, composed of more than 70 proteins and the RNA chaperone small nucleolar RNA (snoRNA) U3.

The protein resides in the cytoplasm. Its subcellular location is the nucleus. The protein localises to the nucleolus. Component of the small ribosomal subunit. The ribosome is a large ribonucleoprotein complex responsible for the synthesis of proteins in the cell. Part of the small subunit (SSU) processome, first precursor of the small eukaryotic ribosomal subunit. During the assembly of the SSU processome in the nucleolus, many ribosome biogenesis factors, an RNA chaperone and ribosomal proteins associate with the nascent pre-rRNA and work in concert to generate RNA folding, modifications, rearrangements and cleavage as well as targeted degradation of pre-ribosomal RNA by the RNA exosome. May play a role during erythropoiesis. The chain is Small ribosomal subunit protein eS1 from Ophiophagus hannah (King cobra).